A 102-amino-acid chain; its full sequence is Flagellar hook-basal body complex protein FliE (102 aa).

This sequence belongs to the FliE family.

The protein resides in the bacterial flagellum basal body. The chain is Flagellar hook-basal body complex protein FliE from Oceanobacillus iheyensis (strain DSM 14371 / CIP 107618 / JCM 11309 / KCTC 3954 / HTE831).